Reading from the N-terminus, the 1034-residue chain is Integrin alpha-V (1034 aa).

Residues 1–19 (MAALRASLLLSCALTAARA) form the signal peptide. Over 20-978 (FNLDAERPAV…WGIQPQPMPV (959 aa)) the chain is Extracellular. FG-GAP repeat units lie at residues 21-86 (NLDA…RNCQ), 97-158 (DFAP…VEYA), 161-213 (RSTT…LAKY), 225-279 (QLAT…GKNM), 280-345 (SSMY…GGFQ), 346-403 (IAKL…GLNA), and 407-470 (RILE…VNPT). N-linked (GlcNAc...) asparagine glycosylation is present at Asn62. Intrachain disulfides connect Cys77–Cys85, Cys126–Cys146, and Cys160–Cys173. Residues Asp248, Asp252, Ile254, and Asp256 each coordinate Ca(2+). N-linked (GlcNAc...) asparagine glycosylation is found at Asn278 and Asn284. Asp302, Asn304, Asp306, Tyr308, Asp310, Asp367, Asp369, Asp371, Phe373, Asp375, Asp431, Asp433, Asn435, Tyr437, and Asp439 together coordinate Ca(2+). 2 cysteine pairs are disulfide-bonded: Cys479–Cys488 and Cys494–Cys551. Asn540 and Asn601 each carry an N-linked (GlcNAc...) asparagine glycan. Disulfide bonds link Cys612–Cys618 and Cys684–Cys697. 4 N-linked (GlcNAc...) asparagine glycosylation sites follow: Asn690, Asn821, Asn837, and Asn860. 2 disulfide bridges follow: Cys838-Cys900 and Cys890-Cys895. Asn931, Asn951, Asn959, and Asn966 each carry an N-linked (GlcNAc...) asparagine glycan. Residues 979–1002 (PVWVIILAVLAGLLLLAVLVLVMY) form a helical membrane-spanning segment. Topologically, residues 1003–1034 (RMGFFKRVRPPQEEQEREQLQPHENGEGTSEA) are cytoplasmic. Positions 1005–1009 (GFFKR) match the GFFKR motif motif. Residues 1013–1028 (PQEEQEREQLQPHENG) show a composition bias toward basic and acidic residues. Residues 1013 to 1034 (PQEEQEREQLQPHENGEGTSEA) are disordered.

Belongs to the integrin alpha chain family. Heterodimer of an alpha and a beta subunit. The alpha subunit is composed of a heavy and a light chain linked by a disulfide bond. Alpha-V (ITGAV) associates with either beta-1 (ITGB1), beta-3 (ITGB3), beta-5 (ITGB5), beta-6 (ITGB6) or beta-8 (ITGB8). Interacts with RAB25. Interacts with CIB1. Integrins ITGAV:ITGB3 and ITGAV:ITGB5 interact with FBLN5 (via N-terminus). ITGAV:ITGB3 and ITGAV:ITGB5 interact with CCN3. ITGAV:ITGB3 interacts with ADGRA2. ITGAV:ITGB3 interacts with FGF2; it is likely that FGF2 can simultaneously bind ITGAV:ITGB3 and FGF receptors. ITGAV:ITGB3 is found in a ternary complex with CX3CR1 and CX3CL1. ITGAV:ITGB3 is found in a ternary complex with NRG1 and ERBB3. ITGAV:ITGB3 is found in a ternary complex with FGF1 and FGFR1. ITGAV:ITGB3 is found in a ternary complex with IGF1 and IGF1R. ITGAV:ITGB3 interacts with IGF2. ITGAV:ITGB3 and ITGAV:ITGB6 interact with FBN1. ITGAV:ITGB3 interacts with CD9, CD81 and CD151 (via second extracellular domain). ITGAV:ITGB6 interacts with TGFB1.

It is found in the membrane. It localises to the cell junction. Its subcellular location is the focal adhesion. Its function is as follows. The alpha-V (ITGAV) integrins are receptors for vitronectin, cytotactin, fibronectin, fibrinogen, laminin, matrix metalloproteinase-2, osteopontin, osteomodulin, prothrombin, thrombospondin, TGFB1 and vWF. They recognize the sequence R-G-D in a wide array of ligands. Alpha-V integrins may play a role in embryo implantation, angiogenesis and wound healing. ITGAV:ITGB3 binds to fractalkine (CX3CL1) and may act as its coreceptor in CX3CR1-dependent fractalkine signaling. ITGAV:ITGB3 binds to NRG1 (via EGF domain) and this binding is essential for NRG1-ERBB signaling. ITGAV:ITGB3 binds to FGF1 and this binding is essential for FGF1 signaling. ITGAV:ITGB3 binds to FGF2 and this binding is essential for FGF2 signaling. ITGAV:ITGB3 binds to IGF1 and this binding is essential for IGF1 signaling. ITGAV:ITGB3 binds to IGF2 and this binding is essential for IGF2 signaling. ITGAV:ITGB3 binds to IL1B and this binding is essential for IL1B signaling. ITGAV:ITGB3 binds to PLA2G2A via a site (site 2) which is distinct from the classical ligand-binding site (site 1) and this induces integrin conformational changes and enhanced ligand binding to site 1. ITGAV:ITGB3 and ITGAV:ITGB6 act as receptors for fibrillin-1 (FBN1) and mediate R-G-D-dependent cell adhesion to FBN1. Integrin alpha-V/beta-6 or alpha-V/beta-8 (ITGAV:ITGB6 or ITGAV:ITGB8) mediates R-G-D-dependent release of transforming growth factor beta-1 (TGF-beta-1) from regulatory Latency-associated peptide (LAP), thereby playing a key role in TGF-beta-1 activation. ITGAV:ITGB3 acts as a receptor for CD40LG. ITGAV:ITGB3 acts as a receptor for IBSP and promotes cell adhesion and migration to IBSP. In Gallus gallus (Chicken), this protein is Integrin alpha-V (ITGAV).